Reading from the N-terminus, the 99-residue chain is HssA/B-like protein 42 (99 aa).

Residues Met1 to Ser29 form a disordered region.

The protein belongs to the hssA/B family.

The polypeptide is HssA/B-like protein 42 (hssl42) (Dictyostelium discoideum (Social amoeba)).